The chain runs to 276 residues: 2-hydroxy-6-oxo-2,4-heptadienoate hydrolase (276 aa).

Positions 28–259 constitute an AB hydrolase-1 domain; it reads NPVVLVHGSG…GRCGHWVQIE (232 aa). Active-site residues include Ser-105, Asp-226, and His-254.

Belongs to the DmpD/TodF/XylF esterase family.

It catalyses the reaction (2Z,4E)-2-hydroxy-6-oxohepta-2,4-dienoate + H2O = (2Z)-2-hydroxypenta-2,4-dienoate + acetate + H(+). The protein operates within xenobiotic degradation; toluene degradation. Its function is as follows. Catalyzes the hydrolysis of 2-hydroxy-6-oxohepta-2,4-dienoate into 2-hydroxypenta-2,4-dienoate and acetate. This chain is 2-hydroxy-6-oxo-2,4-heptadienoate hydrolase (todF), found in Pseudomonas putida (strain ATCC 700007 / DSM 6899 / JCM 31910 / BCRC 17059 / LMG 24140 / F1).